Reading from the N-terminus, the 502-residue chain is Cytochrome P450 83A1 (502 aa).

The chain crosses the membrane as a helical span at residues 1–21 (MEDIIIGVVALAAVLLFFLYQ). C442 serves as a coordination point for heme.

It belongs to the cytochrome P450 family. Heme serves as cofactor.

The protein localises to the endoplasmic reticulum membrane. The enzyme catalyses an (E)-omega-(methylsulfanyl)-alkanal oxime + glutathione + reduced [NADPH--hemoprotein reductase] + O2 = an S-[(1E)-1-(hydroxyimino)-omega-(methylsulfanyl)alkyl]-L-glutathione + oxidized [NADPH--hemoprotein reductase] + 2 H2O + H(+). Functionally, involved in the metabolism of aliphatic and aromatic oximes. Involved in the biosynthesis of both short-chain and long-chain aliphatic glucosinolates. The chain is Cytochrome P450 83A1 (CYP83A1) from Arabidopsis thaliana (Mouse-ear cress).